Reading from the N-terminus, the 118-residue chain is Large ribosomal subunit protein bL12 (118 aa).

The residue at position 1 (methionine 1) is an N-acetylmethionine; in form MA2.

Belongs to the bacterial ribosomal protein bL12 family. Homodimer. Part of the ribosomal stalk of the 50S ribosomal subunit. Forms a multimeric L10(L12)X complex, where L10 forms an elongated spine to which 2 to 4 L12 dimers bind in a sequential fashion. Binds GTP-bound translation factors. In terms of processing, acetylation of Met-1 converts MA1 to MA2.

Its function is as follows. Forms part of the ribosomal stalk which helps the ribosome interact with GTP-bound translation factors. Is thus essential for accurate translation. The chain is Large ribosomal subunit protein bL12 from Micrococcus luteus (Micrococcus lysodeikticus).